Consider the following 254-residue polypeptide: tRNA threonylcarbamoyladenosine dehydratase (254 aa).

It belongs to the HesA/MoeB/ThiF family.

Catalyzes the ATP-dependent dehydration of threonylcarbamoyladenosine at position 37 (t(6)A37) to form cyclic t(6)A37 (ct(6)A37) in tRNAs that read codons beginning with adenine. The protein is tRNA threonylcarbamoyladenosine dehydratase (tcdA) of Bacillus subtilis (strain 168).